The following is a 464-amino-acid chain: Soluble pyridine nucleotide transhydrogenase (464 aa).

FAD is bound at residue 35–44 (DSRRQVGGNC).

This sequence belongs to the class-I pyridine nucleotide-disulfide oxidoreductase family. The cofactor is FAD.

The protein resides in the cytoplasm. The enzyme catalyses NAD(+) + NADPH = NADH + NADP(+). In terms of biological role, conversion of NADPH, generated by peripheral catabolic pathways, to NADH, which can enter the respiratory chain for energy generation. The protein is Soluble pyridine nucleotide transhydrogenase of Pseudomonas syringae pv. syringae (strain B728a).